Reading from the N-terminus, the 401-residue chain is Eukaryotic translation initiation factor 3 subunit M (401 aa).

A PCI domain is found at 188–356 (QRMLSHQFLV…RIVNVNSSTQ (169 aa)).

Belongs to the eIF-3 subunit M family. As to quaternary structure, component of the eukaryotic translation initiation factor 3 (eIF-3) complex.

Its subcellular location is the cytoplasm. Its function is as follows. Component of the eukaryotic translation initiation factor 3 (eIF-3) complex, which is involved in protein synthesis of a specialized repertoire of mRNAs and, together with other initiation factors, stimulates binding of mRNA and methionyl-tRNAi to the 40S ribosome. The eIF-3 complex specifically targets and initiates translation of a subset of mRNAs involved in cell proliferation. This Dictyostelium discoideum (Social amoeba) protein is Eukaryotic translation initiation factor 3 subunit M (eif3m).